We begin with the raw amino-acid sequence, 635 residues long: MIKITLKDGKVMEFEEGIKISDIAMKISPALYKKALAAKIDGETVDLMTELHKDSSLEILTFEDEMGKWALRHTGSHMLAQAVKRLYPEVKLAIGPAIDTGFYYDFEADFTFTPEMLEKIEAEIKKIIKENHKLERFELPREEAIKLMKEKNEDYKVELIEDLPEGEVISFYKQGDFTDLCAGPHVPSTGKVKSVKLLSLAGAYWRGDENNKMLQRIYGTAFTKKSELDEYLNMIEEAKKRDHRKLGKELDLFSIHEEGPGFPFFHPKGMIVRNILESFWREEHTKAGYQEIRTPLILNEALWHQSGHWDHYKENMYFTNIDDDDYAIKPMNCPGGILVYKNSMHSYRDLPLRLSELGIVHRHELSGALHGLMRVRCFTQDDAHLYMTKEQIKEEVVGIIKLIDKFYKLFGFEYFVELSTRPEDSMGSDEDWEIATNGLREALDSIGKEYRVNEGDGAFYGPKIDFHLKDCIGRTWQCGTIQLDFQMPERFDLSYIGADGEKHRPVMVHRTIYGSVERFIGILIEQYAGAFPTWLAPVQVKLMNITDSQYDYLKKVEEALKENNIRVEIDTRNEKIGYKIREAQLQKVPYMLILGDKEVEAGKVAVRSRKDGDLGAISLEEFIEKIKNEIKNKTN.

Positions 1 to 61 constitute a TGS domain; sequence MIKITLKDGK…HKDSSLEILT (61 aa). The tract at residues 242–532 is catalytic; sequence DHRKLGKELD…LIEQYAGAFP (291 aa). Zn(2+) contacts are provided by cysteine 333, histidine 384, and histidine 509.

It belongs to the class-II aminoacyl-tRNA synthetase family. Homodimer. Zn(2+) is required as a cofactor.

It localises to the cytoplasm. It catalyses the reaction tRNA(Thr) + L-threonine + ATP = L-threonyl-tRNA(Thr) + AMP + diphosphate + H(+). Catalyzes the attachment of threonine to tRNA(Thr) in a two-step reaction: L-threonine is first activated by ATP to form Thr-AMP and then transferred to the acceptor end of tRNA(Thr). Also edits incorrectly charged L-seryl-tRNA(Thr). The protein is Threonine--tRNA ligase of Clostridium botulinum (strain ATCC 19397 / Type A).